The following is a 72-amino-acid chain: Conotoxin VnMKLT2-021 (72 aa).

The first 22 residues, 1 to 22 (MKLTCVLIVAVLFLTACQLTTA), serve as a signal peptide directing secretion. A propeptide spanning residues 23–45 (ASYARSERQHPDLGSSDQNSKLT) is cleaved from the precursor. 3 disulfide bridges follow: C48–C62, C55–C66, and C61–C71.

This sequence belongs to the conotoxin O1 superfamily. In terms of tissue distribution, expressed by the venom duct.

The protein resides in the secreted. This Conus ventricosus (Mediterranean cone) protein is Conotoxin VnMKLT2-021.